We begin with the raw amino-acid sequence, 325 residues long: D-xylose 1-dehydrogenase (NADP(+)) 2 (325 aa).

The first 22 residues, 1-22 (MMFGILGTAGIGVKSVIPAVQA), serve as a signal peptide directing secretion.

This sequence belongs to the Gfo/Idh/MocA family. Homotetramer.

The protein resides in the secreted. It carries out the reaction D-xylose + NADP(+) = D-xylono-1,5-lactone + NADPH + H(+). Functionally, NADP-dependent D-xylose dehydrogenase involved in the degradation of D-xylose, a major component of hemicelluloses such as xylan. Even if it shows D-xylose dehydrogenase activity, it is not essential for D-xylose degradation. This chain is D-xylose 1-dehydrogenase (NADP(+)) 2, found in Haloferax volcanii (strain ATCC 29605 / DSM 3757 / JCM 8879 / NBRC 14742 / NCIMB 2012 / VKM B-1768 / DS2) (Halobacterium volcanii).